The sequence spans 97 residues: Acylphosphatase (97 aa).

Residues 11–97 (TYYVRVRGTV…EKRYERFEQH (87 aa)) form the Acylphosphatase-like domain. Catalysis depends on residues Arg26 and Asn44. The disordered stretch occupies residues 76 to 97 (RVTEVSGEERSTEKRYERFEQH). Positions 82–97 (GEERSTEKRYERFEQH) are enriched in basic and acidic residues.

This sequence belongs to the acylphosphatase family.

It carries out the reaction an acyl phosphate + H2O = a carboxylate + phosphate + H(+). This chain is Acylphosphatase (acyP), found in Paraburkholderia xenovorans (strain LB400).